The chain runs to 338 residues: Probable tRNA pseudouridine synthase B (338 aa).

Residue Asp78 is the Nucleophile of the active site. A PUA domain is found at 245 to 320; the sequence is LPKIILRDSA…IAASPIRVLM (76 aa).

Belongs to the pseudouridine synthase TruB family. Type 2 subfamily.

It carries out the reaction uridine(55) in tRNA = pseudouridine(55) in tRNA. Its function is as follows. Could be responsible for synthesis of pseudouridine from uracil-55 in the psi GC loop of transfer RNAs. This is Probable tRNA pseudouridine synthase B from Methanosarcina acetivorans (strain ATCC 35395 / DSM 2834 / JCM 12185 / C2A).